The primary structure comprises 1076 residues: Nucleoporin NUP1 (1076 aa).

The segment covering 1–11 has biased composition (low complexity); sequence MSSNTSSVMSS. The disordered stretch occupies residues 1–39; that stretch reads MSSNTSSVMSSPRVEKRSFSSTLKSFFTNPNKKRPSSKK. Ser-2 is modified (N-acetylserine). Residues 19 to 30 show a composition bias toward polar residues; that stretch reads FSSTLKSFFTNP. Ser-54 and Ser-161 each carry phosphoserine. Disordered regions lie at residues 143–183 and 224–260; these read SQSK…TNVG and KKDN…ATGP. 2 stretches are compositionally biased toward polar residues: residues 154 to 170 and 243 to 260; these read LCTS…SCTR and NRNN…ATGP. Residues 336 to 338 form an FXF 1 repeat; it reads FDF. Thr-381 is modified (phosphothreonine). Ser-383 is subject to Phosphoserine. Residues 384-386 form an FXF 2 repeat; the sequence is FNF. The interval 403–518 is disordered; the sequence is TTLFNFGGKS…SFVFGASDKQ (116 aa). FXFG repeat units lie at residues 406–409 and 422–425; these read FNFG and FKFG. Residues 426–439 show a composition bias toward basic and acidic residues; the sequence is KTSEKSENHTESDA. FXFG repeat units lie at residues 448-451 and 484-487; these read FSFG and FDFG. Residues 488–505 are compositionally biased toward basic and acidic residues; that stretch reads KTGDQKETKKGESEKDAS. 4 FXFG repeats span residues 510 to 513, 525 to 528, 543 to 546, and 571 to 574; these read FVFG and FTFG. The disordered stretch occupies residues 548-743; that stretch reads AATAKETHTK…SMKSTASTAA (196 aa). FXF repeat units follow at residues 591-593, 614-616, 636-638, and 657-659; these read FSF and FTF. 2 stretches are compositionally biased toward polar residues: residues 634–649 and 658–667; these read PTFS…SSVV and TFASSKTSQP. The residue at position 637 (Ser-637) is a Phosphoserine. Residues 671–674 form an FXFG 9 repeat; the sequence is FSFG. One copy of the FXF 7 repeat lies at 689 to 691; sequence FSF. FXFG repeat units lie at residues 708-711 and 727-730; these read FTFG and FSFG. Residues 708–723 are compositionally biased toward low complexity; sequence FTFGGSTTNNTTTTST. The FXF 8 repeat unit spans residues 753-755; it reads FSF. One copy of the FXFG 12 repeat lies at 800 to 803; it reads FSFG. FXF repeat units follow at residues 819–821 and 866–868; these read FSF and FGF. The stretch at 885 to 888 is one FXFG 13 repeat; it reads FNFG. The stretch at 929–931 is one FXF 11 repeat; it reads FNF. The tract at residues 940–979 is disordered; the sequence is GGSVFNMNGNTNANTVFAGSNNQPHQSQTPSFNTNSSFTP. Positions 944–964 are enriched in polar residues; sequence FNMNGNTNANTVFAGSNNQPH. Over residues 965 to 979 the composition is skewed to low complexity; that stretch reads QSQTPSFNTNSSFTP. 3 FG repeats span residues 1008 to 1009, 1027 to 1028, and 1038 to 1039; these read FG. The segment at 1025–1054 is disordered; sequence SIFGGAGGVPTTSFGQPQSAPNQMGMGTNN. Residues 1034 to 1045 are compositionally biased toward polar residues; the sequence is PTTSFGQPQSAP. Positions 1040–1076 are interaction with KAP95; the sequence is QPQSAPNQMGMGTNNGMSMGGGVMANRKIARMRHSKR.

Component of the nuclear pore complex (NPC). NPC constitutes the exclusive means of nucleocytoplasmic transport. NPCs allow the passive diffusion of ions and small molecules and the active, nuclear transport receptor-mediated bidirectional transport of macromolecules such as proteins, RNAs, ribonucleoparticles (RNPs), and ribosomal subunits across the nuclear envelope. Due to its 8-fold rotational symmetry, all subunits are present with 8 copies or multiples thereof. Interacts through its FG repeats with nuclear transport receptors. Binds to the nuclear basket of the NPC through NUP60. Interacts with KAP122. Post-translationally, phosphorylated by CDC28.

The protein resides in the nucleus. Its subcellular location is the nuclear pore complex. It localises to the nucleus membrane. Functionally, functions as a component of the nuclear pore complex (NPC). NPC components, collectively referred to as nucleoporins (NUPs), can play the role of both NPC structural components and of docking or interaction partners for transiently associated nuclear transport factors. Active directional transport is assured by both, a Phe-Gly (FG) repeat affinity gradient for these transport factors across the NPC and a transport cofactor concentration gradient across the nuclear envelope (GSP1 and GSP2 GTPases associated predominantly with GTP in the nucleus, with GDP in the cytoplasm). As one of the FG repeat nucleoporins NUP1 is involved in interactions with and guidance of nuclear transport receptors such as SRP1-KAP95 (importin alpha and beta) through the NPC. Like the closely related NUP2 it also plays an important role in disassembling and recycling SRP1-KAP95 to the cytoplasm after nuclear import. Upon entry of the heterotrimeric SRP1-KAP95-cargo complex in the nucleus, NUP1 binds through its C-terminus to KAP95, thus accelerating the release of KAP95 and, indirectly, of the nuclear localization signal (NLS)-containing cargo from the SRP1-KAP95-cargo complex. The protein is Nucleoporin NUP1 (NUP1) of Saccharomyces cerevisiae (strain ATCC 204508 / S288c) (Baker's yeast).